Reading from the N-terminus, the 169-residue chain is MIKKTLLVIALTFTVTTAFAHSMDHSKMDHGAMPMDHSQMMGMEGMSDVGMPAPGAKANKVVHVILSDDMKITFKKDVTIEPNDVVQFVVMNTGKIDHEFSIGSAVEQLKHREMMRQMGNHEHDSGSTVTVKPGKTKELLWHFQGDNKVEFACNIPGHAEAGMVKSIEL.

Positions 1-20 are cleaved as a signal peptide; it reads MIKKTLLVIALTFTVTTAFA. His98, Cys153, His158, and Met163 together coordinate Cu(2+).

This sequence belongs to the CopI family.

It is found in the periplasm. Functionally, involved in copper tolerance. Mediates copper tolerance in aerobiosis. May also mediate tolerance under anaerobiosis. Not required for virulence or colonization in the mouse model. The polypeptide is Copper-resistant cuproprotein CopI (Vibrio cholerae serotype O1 (strain ATCC 39315 / El Tor Inaba N16961)).